A 568-amino-acid chain; its full sequence is Urease subunit alpha (568 aa).

The 439-residue stretch at 130–568 folds into the Urease domain; that stretch reads GGIDTHIHFI…LPMAQRYFLF (439 aa). Ni(2+) is bound by residues H135, H137, and K218. K218 is modified (N6-carboxylysine). H220 contributes to the substrate binding site. Ni(2+) is bound by residues H247 and H273. The active-site Proton donor is H321. D361 contributes to the Ni(2+) binding site.

Belongs to the metallo-dependent hydrolases superfamily. Urease alpha subunit family. In terms of assembly, heterotrimer of UreA (gamma), UreB (beta) and UreC (alpha) subunits. Three heterotrimers associate to form the active enzyme. Ni cation serves as cofactor. Post-translationally, carboxylation allows a single lysine to coordinate two nickel ions.

It is found in the cytoplasm. The catalysed reaction is urea + 2 H2O + H(+) = hydrogencarbonate + 2 NH4(+). It functions in the pathway nitrogen metabolism; urea degradation; CO(2) and NH(3) from urea (urease route): step 1/1. The polypeptide is Urease subunit alpha (Burkholderia vietnamiensis (strain G4 / LMG 22486) (Burkholderia cepacia (strain R1808))).